We begin with the raw amino-acid sequence, 497 residues long: Probable cytosol aminopeptidase (497 aa).

Positions 267 and 272 each coordinate Mn(2+). The active site involves lysine 279. Residues aspartate 290, aspartate 349, and glutamate 351 each coordinate Mn(2+). Residue arginine 353 is part of the active site.

The protein belongs to the peptidase M17 family. The cofactor is Mn(2+).

The protein localises to the cytoplasm. The catalysed reaction is Release of an N-terminal amino acid, Xaa-|-Yaa-, in which Xaa is preferably Leu, but may be other amino acids including Pro although not Arg or Lys, and Yaa may be Pro. Amino acid amides and methyl esters are also readily hydrolyzed, but rates on arylamides are exceedingly low.. It catalyses the reaction Release of an N-terminal amino acid, preferentially leucine, but not glutamic or aspartic acids.. Its function is as follows. Presumably involved in the processing and regular turnover of intracellular proteins. Catalyzes the removal of unsubstituted N-terminal amino acids from various peptides. In Nitrosomonas eutropha (strain DSM 101675 / C91 / Nm57), this protein is Probable cytosol aminopeptidase.